Consider the following 205-residue polypeptide: LexA repressor (205 aa).

A DNA-binding region (H-T-H motif) is located at residues 28-48; sequence IRDIMKHFNFKSPRAAHKHLI. Active-site for autocatalytic cleavage activity residues include Ser-125 and Lys-163.

Belongs to the peptidase S24 family. In terms of assembly, homodimer.

The catalysed reaction is Hydrolysis of Ala-|-Gly bond in repressor LexA.. Functionally, represses a number of genes involved in the response to DNA damage (SOS response), including recA and lexA. In the presence of single-stranded DNA, RecA interacts with LexA causing an autocatalytic cleavage which disrupts the DNA-binding part of LexA, leading to derepression of the SOS regulon and eventually DNA repair. In Petrotoga mobilis (strain DSM 10674 / SJ95), this protein is LexA repressor.